The primary structure comprises 275 residues: MTLQQEIIQALGAKPHINPEEEIRRSVDFLKAYLKTYPFLKSLVLGISGGQDSTLAGKLSQMAIAELREETGDNALQFIAVRLPYGVQADEQDCQDAIAFIQPDRVLTVNIKGAVLASEQALREAGIELSDFVRGNEKARERMKAQYSIAGMTHGVVVGTDHAAEAITGFFTKYGDGGTDINPLHRLNKRQGKQLLAALGCPEHLYKKVPTADLEDDRPSLPDEAALGVTYDNIDDYLEGKTLDSAIAKTIEGWYVKTEHKRRLPITVFDDFWKR.

Residue 46–53 (GISGGQDS) coordinates ATP. Residue Asp-52 participates in Mg(2+) binding. Deamido-NAD(+) is bound at residue Arg-140. Thr-160 contacts ATP. Residue Glu-165 participates in Mg(2+) binding. Deamido-NAD(+)-binding residues include Lys-173 and Asp-180. ATP is bound by residues Lys-189 and Thr-211. A deamido-NAD(+)-binding site is contributed by 260–261 (HK).

It belongs to the NAD synthetase family. Homodimer.

The enzyme catalyses deamido-NAD(+) + NH4(+) + ATP = AMP + diphosphate + NAD(+) + H(+). It functions in the pathway cofactor biosynthesis; NAD(+) biosynthesis; NAD(+) from deamido-NAD(+) (ammonia route): step 1/1. Functionally, catalyzes the ATP-dependent amidation of deamido-NAD to form NAD. Uses ammonia as a nitrogen source. This is NH(3)-dependent NAD(+) synthetase from Salmonella paratyphi A (strain ATCC 9150 / SARB42).